The sequence spans 555 residues: Zinc transporter ZIP5 (555 aa).

Residues Met1–Gly242 lie on the Extracellular side of the membrane. Positions Lys108–Ser148 are disordered. A helical membrane pass occupies residues Phe243–Val263. The Cytoplasmic portion of the chain corresponds to Ala264–Ala314. The chain crosses the membrane as a helical span at residues Val315–Leu335. Residues Gly336–Leu408 are Extracellular-facing. The segment covering Thr363–His374 has biased composition (polar residues). Residues Thr363 to Pro383 are disordered. The helical transmembrane segment at Ala409 to Phe429 threads the bilayer. Residues Cys430 to Arg452 are Cytoplasmic-facing. Residues Leu453–Ala473 form a helical membrane-spanning segment. Residues Leu474–Ser482 are Extracellular-facing. Residues Pro483–Pro503 form a helical membrane-spanning segment. Residues Glu504–Arg518 lie on the Cytoplasmic side of the membrane. The helical transmembrane segment at Phe519 to Phe539 threads the bilayer. Residues Glu540 to Asn555 lie on the Extracellular side of the membrane.

The protein belongs to the ZIP transporter (TC 2.A.5) family.

It localises to the basolateral cell membrane. The enzyme catalyses Zn(2+)(in) = Zn(2+)(out). Uniporter that transports zinc(2+) into polarized cells of enterocytes, pancreatic acinar and endoderm cells across the basolateral membrane and participates, notably, in zinc excretion from the intestine by the uptake of zinc from the blood into the intestine. The transport mechanism is temperature- and concentration-dependent and saturable. Mediates zinc homeostasis that is essential for venous angiogenesis. In Danio rerio (Zebrafish), this protein is Zinc transporter ZIP5 (slc39a5).